A 467-amino-acid polypeptide reads, in one-letter code: 3-isopropylmalate dehydratase large subunit (467 aa).

[4Fe-4S] cluster contacts are provided by C348, C408, and C411. The interval 417–445 (DQLTPGERSASTSNRNFEGRQGKGGRTHL) is disordered.

Belongs to the aconitase/IPM isomerase family. LeuC type 1 subfamily. As to quaternary structure, heterodimer of LeuC and LeuD. The cofactor is [4Fe-4S] cluster.

It catalyses the reaction (2R,3S)-3-isopropylmalate = (2S)-2-isopropylmalate. Its pathway is amino-acid biosynthesis; L-leucine biosynthesis; L-leucine from 3-methyl-2-oxobutanoate: step 2/4. Catalyzes the isomerization between 2-isopropylmalate and 3-isopropylmalate, via the formation of 2-isopropylmaleate. This chain is 3-isopropylmalate dehydratase large subunit, found in Saccharopolyspora erythraea (strain ATCC 11635 / DSM 40517 / JCM 4748 / NBRC 13426 / NCIMB 8594 / NRRL 2338).